The sequence spans 437 residues: MADPKKLYIKTYGCQMNVYDSERMAEAMGGEGYVQTDRAEDADMILLNTCHIREKAAEKVYSELGRFKPLKAEKPDLKIGVAGCVAQAEGAEIMRRQPLVDLVVGPQAYHRLPELTARAATGAKALDTDFPEEDKFDHLAARPKAKRGPTAFLTVQEGCDKFCAFCVVPYTRGAEVSRPAARVLTEARDLVERGVREITLLGQNVNAYHGHARGLAGLIWDLAEIDGLERIRFTTSHPNDMDDALIAAHGACDKLMPYLHLPVQSGSDRILKAMNRKHTAESYIRLIERIRAARPDILLSGDFIVGFPGETDQDFADTMALVEAVGYGQAYSFKYSARPGTPAAEKEDVPGEVADARLQTLQALLTRQQRAIQDAKVGTTARVLFEKPGRLPGQMVGKSEHLHAVHVAAPDAARGDLVRVRIAESSANSLRGVLIAA.

Residues 5–121 (KKLYIKTYGC…LPELTARAAT (117 aa)) enclose the MTTase N-terminal domain. [4Fe-4S] cluster contacts are provided by Cys-14, Cys-50, Cys-84, Cys-159, Cys-163, and Cys-166. Positions 145 to 371 (AKRGPTAFLT…QALLTRQQRA (227 aa)) constitute a Radical SAM core domain. The TRAM domain maps to 374–436 (DAKVGTTARV…ANSLRGVLIA (63 aa)).

The protein belongs to the methylthiotransferase family. MiaB subfamily. In terms of assembly, monomer. Requires [4Fe-4S] cluster as cofactor.

Its subcellular location is the cytoplasm. The enzyme catalyses N(6)-dimethylallyladenosine(37) in tRNA + (sulfur carrier)-SH + AH2 + 2 S-adenosyl-L-methionine = 2-methylsulfanyl-N(6)-dimethylallyladenosine(37) in tRNA + (sulfur carrier)-H + 5'-deoxyadenosine + L-methionine + A + S-adenosyl-L-homocysteine + 2 H(+). In terms of biological role, catalyzes the methylthiolation of N6-(dimethylallyl)adenosine (i(6)A), leading to the formation of 2-methylthio-N6-(dimethylallyl)adenosine (ms(2)i(6)A) at position 37 in tRNAs that read codons beginning with uridine. The protein is tRNA-2-methylthio-N(6)-dimethylallyladenosine synthase of Dinoroseobacter shibae (strain DSM 16493 / NCIMB 14021 / DFL 12).